The sequence spans 234 residues: S-adenosylmethionine synthase 1 (234 aa).

ATP is bound by residues 10-12, 78-81, aspartate 89, 95-96, alanine 112, lysine 116, and lysine 120; these read DGK, SGRF, and RK. Aspartate 89 contacts L-methionine. Lysine 120 lines the L-methionine pocket.

This sequence belongs to the AdoMet synthase family. Homotetramer. Requires Mn(2+) as cofactor. Mg(2+) serves as cofactor. It depends on Co(2+) as a cofactor. The cofactor is K(+). Mainly in floral buds and roots.

The protein resides in the cytoplasm. The catalysed reaction is L-methionine + ATP + H2O = S-adenosyl-L-methionine + phosphate + diphosphate. Its pathway is amino-acid biosynthesis; S-adenosyl-L-methionine biosynthesis; S-adenosyl-L-methionine from L-methionine: step 1/1. Its function is as follows. Catalyzes the formation of S-adenosylmethionine from methionine and ATP. The reaction comprises two steps that are both catalyzed by the same enzyme: formation of S-adenosylmethionine (AdoMet) and triphosphate, and subsequent hydrolysis of the triphosphate. The polypeptide is S-adenosylmethionine synthase 1 (SMS-1) (Petroselinum crispum (Parsley)).